The primary structure comprises 187 residues: Transmembrane protein 212 (187 aa).

5 consecutive transmembrane segments (helical) span residues 11–31 (TLVT…FPVF), 42–62 (VWIA…SLVL), 76–96 (AVFT…TVAL), 106–126 (FYSF…TFPF), and 148–168 (LQVL…AVFI).

It localises to the membrane. This is Transmembrane protein 212 (Tmem212) from Mus musculus (Mouse).